The primary structure comprises 176 residues: Adenine phosphoribosyltransferase (176 aa).

The protein belongs to the purine/pyrimidine phosphoribosyltransferase family. As to quaternary structure, homodimer.

It localises to the cytoplasm. It catalyses the reaction AMP + diphosphate = 5-phospho-alpha-D-ribose 1-diphosphate + adenine. It participates in purine metabolism; AMP biosynthesis via salvage pathway; AMP from adenine: step 1/1. Catalyzes a salvage reaction resulting in the formation of AMP, that is energically less costly than de novo synthesis. The chain is Adenine phosphoribosyltransferase from Methylobacillus flagellatus (strain ATCC 51484 / DSM 6875 / VKM B-1610 / KT).